An 861-amino-acid chain; its full sequence is DNA mismatch repair protein MutS (861 aa).

616-623 (GPNMGGKS) contacts ATP.

The protein belongs to the DNA mismatch repair MutS family.

This protein is involved in the repair of mismatches in DNA. It is possible that it carries out the mismatch recognition step. This protein has a weak ATPase activity. The protein is DNA mismatch repair protein MutS of Haemophilus influenzae (strain PittEE).